The chain runs to 169 residues: Peptidyl-prolyl cis-trans isomerase (169 aa).

Positions F5–Q168 constitute a PPIase cyclophilin-type domain.

This sequence belongs to the cyclophilin-type PPIase family.

Its subcellular location is the cytoplasm. It catalyses the reaction [protein]-peptidylproline (omega=180) = [protein]-peptidylproline (omega=0). Binds cyclosporin A (CsA). CsA mediates some of its effects via an inhibitory action on PPIase. Functionally, PPIases accelerate the folding of proteins. It catalyzes the cis-trans isomerization of proline imidic peptide bonds in oligopeptides. The protein is Peptidyl-prolyl cis-trans isomerase of Unspecified eudicot DB-1992.